The chain runs to 264 residues: Thiazole synthase (264 aa).

Lys106 serves as the catalytic Schiff-base intermediate with DXP. Residues Gly167, 193-194, and 215-216 contribute to the 1-deoxy-D-xylulose 5-phosphate site; these read AG and NS.

It belongs to the ThiG family. In terms of assembly, homotetramer. Forms heterodimers with either ThiH or ThiS.

The protein resides in the cytoplasm. It carries out the reaction [ThiS sulfur-carrier protein]-C-terminal-Gly-aminoethanethioate + 2-iminoacetate + 1-deoxy-D-xylulose 5-phosphate = [ThiS sulfur-carrier protein]-C-terminal Gly-Gly + 2-[(2R,5Z)-2-carboxy-4-methylthiazol-5(2H)-ylidene]ethyl phosphate + 2 H2O + H(+). The protein operates within cofactor biosynthesis; thiamine diphosphate biosynthesis. Its function is as follows. Catalyzes the rearrangement of 1-deoxy-D-xylulose 5-phosphate (DXP) to produce the thiazole phosphate moiety of thiamine. Sulfur is provided by the thiocarboxylate moiety of the carrier protein ThiS. In vitro, sulfur can be provided by H(2)S. This Prochlorococcus marinus (strain MIT 9215) protein is Thiazole synthase.